A 231-amino-acid chain; its full sequence is U1 small nuclear ribonucleoprotein C (231 aa).

The Matrin-type zinc-finger motif lies at Y4 to D36. Residues H49–R61 are compositionally biased toward basic residues. Disordered regions lie at residues H49–E71, P137–P177, and E205–N231.

Belongs to the U1 small nuclear ribonucleoprotein C family. As to quaternary structure, U1 snRNP is composed of the 7 core Sm proteins SMB1, SMD1, SMD2, SMD3, SME1, SMX3 and SMX2 (Sm proteins B, D1, D2, D3, E, F and G, respectively) that assemble in a heptameric protein ring on the Sm site of the small nuclear RNA to form the core snRNP, and at least 10 U1 snRNP-specific proteins SNP1/U1-70K, MUD1/U1-A, YHC1/U1-C, LUC7, NAM8, PRP39, PRP40, PRP42, SNU56 and SNU71. YHC1/U1-C interacts with U1 snRNA and the 5' splice-site region of the pre-mRNA.

It is found in the nucleus. Component of the spliceosomal U1 snRNP, which is essential for recognition of the pre-mRNA 5' splice-site and the subsequent assembly of the spliceosome. YHC1/U1-C is directly involved in initial 5' splice-site recognition for both constitutive and regulated alternative splicing. The interaction with the 5' splice-site seems to precede base-pairing between the pre-mRNA and the U1 snRNA. Stimulates commitment or early (E) complex formation by stabilizing the base pairing of the 5' end of the U1 snRNA and the 5' splice-site region. In Saccharomyces cerevisiae (strain ATCC 204508 / S288c) (Baker's yeast), this protein is U1 small nuclear ribonucleoprotein C.